Consider the following 81-residue polypeptide: Cytochrome b559 subunit alpha (81 aa).

The helical transmembrane segment at 21–35 threads the bilayer; the sequence is VIHSITIPMLFVAGW. Residue His-23 coordinates heme.

This sequence belongs to the PsbE/PsbF family. Heterodimer of an alpha subunit and a beta subunit. PSII is composed of 1 copy each of membrane proteins PsbA, PsbB, PsbC, PsbD, PsbE, PsbF, PsbH, PsbI, PsbJ, PsbK, PsbL, PsbM, PsbT, PsbX, PsbY, PsbZ, Psb30/Ycf12, peripheral proteins PsbO, CyanoQ (PsbQ), PsbU, PsbV and a large number of cofactors. It forms dimeric complexes. Heme b serves as cofactor.

The protein resides in the cellular thylakoid membrane. Functionally, this b-type cytochrome is tightly associated with the reaction center of photosystem II (PSII). PSII is a light-driven water:plastoquinone oxidoreductase that uses light energy to abstract electrons from H(2)O, generating O(2) and a proton gradient subsequently used for ATP formation. It consists of a core antenna complex that captures photons, and an electron transfer chain that converts photonic excitation into a charge separation. The sequence is that of Cytochrome b559 subunit alpha from Gloeothece citriformis (strain PCC 7424) (Cyanothece sp. (strain PCC 7424)).